The sequence spans 369 residues: Ribosomal RNA large subunit methyltransferase M (369 aa).

Residues serine 198, 231-234, aspartate 250, aspartate 270, and aspartate 287 contribute to the S-adenosyl-L-methionine site; that span reads APGG. The active-site Proton acceptor is lysine 316.

This sequence belongs to the class I-like SAM-binding methyltransferase superfamily. RNA methyltransferase RlmE family. RlmM subfamily. As to quaternary structure, monomer.

It localises to the cytoplasm. It carries out the reaction cytidine(2498) in 23S rRNA + S-adenosyl-L-methionine = 2'-O-methylcytidine(2498) in 23S rRNA + S-adenosyl-L-homocysteine + H(+). Catalyzes the 2'-O-methylation at nucleotide C2498 in 23S rRNA. This Idiomarina loihiensis (strain ATCC BAA-735 / DSM 15497 / L2-TR) protein is Ribosomal RNA large subunit methyltransferase M.